The chain runs to 239 residues: Ribonuclease 3 (239 aa).

The region spanning 12–137 (REKVEAVIGY…LIAAIYLDAG (126 aa)) is the RNase III domain. E50 is a Mg(2+) binding site. D54 is a catalytic residue. Mg(2+)-binding residues include D123 and E126. E126 is a catalytic residue. The DRBM domain occupies 162–231 (DAKTELQEWA…ATRLLEREGV (70 aa)).

Belongs to the ribonuclease III family. Homodimer. Requires Mg(2+) as cofactor.

It is found in the cytoplasm. It carries out the reaction Endonucleolytic cleavage to 5'-phosphomonoester.. In terms of biological role, digests double-stranded RNA. Involved in the processing of primary rRNA transcript to yield the immediate precursors to the large and small rRNAs (23S and 16S). Processes some mRNAs, and tRNAs when they are encoded in the rRNA operon. Processes pre-crRNA and tracrRNA of type II CRISPR loci if present in the organism. The sequence is that of Ribonuclease 3 from Allorhizobium ampelinum (strain ATCC BAA-846 / DSM 112012 / S4) (Agrobacterium vitis (strain S4)).